A 428-amino-acid polypeptide reads, in one-letter code: Gamma-glutamyl phosphate reductase (428 aa).

This sequence belongs to the gamma-glutamyl phosphate reductase family.

It is found in the cytoplasm. The catalysed reaction is L-glutamate 5-semialdehyde + phosphate + NADP(+) = L-glutamyl 5-phosphate + NADPH + H(+). The protein operates within amino-acid biosynthesis; L-proline biosynthesis; L-glutamate 5-semialdehyde from L-glutamate: step 2/2. Catalyzes the NADPH-dependent reduction of L-glutamate 5-phosphate into L-glutamate 5-semialdehyde and phosphate. The product spontaneously undergoes cyclization to form 1-pyrroline-5-carboxylate. This is Gamma-glutamyl phosphate reductase from Afipia carboxidovorans (strain ATCC 49405 / DSM 1227 / KCTC 32145 / OM5) (Oligotropha carboxidovorans).